Consider the following 90-residue polypeptide: MSRTIFCTVLQRDAEGQDFQLYPGDLGKRIYNEISKEAWAQWQTKQTMLINEKKLSMMNVDDRKLLEQEMIKFLFEGKDVHIEGYTPPSH.

The protein belongs to the Fe(2+)-trafficking protein family. As to quaternary structure, monomer.

Its function is as follows. Could be a mediator in iron transactions between iron acquisition and iron-requiring processes, such as synthesis and/or repair of Fe-S clusters in biosynthetic enzymes. In Pectobacterium atrosepticum (strain SCRI 1043 / ATCC BAA-672) (Erwinia carotovora subsp. atroseptica), this protein is Probable Fe(2+)-trafficking protein.